The following is a 166-amino-acid chain: UPF0336 protein Mb0656 (166 aa).

The protein belongs to the UPF0336 family.

This Mycobacterium bovis (strain ATCC BAA-935 / AF2122/97) protein is UPF0336 protein Mb0656.